We begin with the raw amino-acid sequence, 374 residues long: uncharacterized protein (374 aa).

Residues 1 to 13 show a composition bias toward basic and acidic residues; sequence METKYHEYDDVQT. Disordered regions lie at residues 1–20, 91–193, and 236–374; these read METKYHEYDDVQTKDTPSNK, SPMT…PLNQ, and KINN…SDFE. Positions 95–155 are enriched in low complexity; sequence NNNNNNNNNN…NNSSNNNNNN (61 aa). A compositionally biased stretch (polar residues) spans 166-193; the sequence is ISSNQSSPLSIYSTPPNPSSYVSSPLNQ. The span at 242 to 262 shows a compositional bias: pro residues; sequence APPPPPKACAPPPPPPPPPPI. The span at 277–300 shows a compositional bias: low complexity; that stretch reads NNNNNNNNNNNSSNTNDSNNTNNT.

This is an uncharacterized protein from Dictyostelium discoideum (Social amoeba).